The chain runs to 181 residues: Large ribosomal subunit protein uL5 (181 aa).

Belongs to the universal ribosomal protein uL5 family. As to quaternary structure, part of the 50S ribosomal subunit; contacts the 5S rRNA and probably tRNA. Forms a bridge to the 30S subunit in the 70S ribosome.

Its function is as follows. This is one of the proteins that bind and probably mediate the attachment of the 5S RNA into the large ribosomal subunit, where it forms part of the central protuberance. In the 70S ribosome it contacts protein S13 of the 30S subunit (bridge B1b), connecting the 2 subunits; this bridge is implicated in subunit movement. May contact the P site tRNA; the 5S rRNA and some of its associated proteins might help stabilize positioning of ribosome-bound tRNAs. This Methanococcus maripaludis (strain DSM 14266 / JCM 13030 / NBRC 101832 / S2 / LL) protein is Large ribosomal subunit protein uL5.